The chain runs to 377 residues: NIF3-like protein 1 (377 aa).

Lysine 109 is subject to N6-acetyllysine. The interval 244-377 is mediates interaction with COPS2; it reads LLLYTGMGRL…ETDRDPLHVI (134 aa). Residue threonine 255 is modified to Phosphothreonine. The residue at position 259 (serine 259) is a Phosphoserine.

The protein belongs to the GTP cyclohydrolase I type 2/NIF3 family. As to quaternary structure, homodimer. Interacts with COPS2. Interacts with THOC7.

The protein resides in the cytoplasm. It localises to the nucleus. In terms of biological role, may function as a transcriptional corepressor through its interaction with COPS2, negatively regulating the expression of genes involved in neuronal differentiation. This chain is NIF3-like protein 1, found in Bos taurus (Bovine).